Reading from the N-terminus, the 683-residue chain is Protein hook (683 aa).

Residues 5–123 (NGMYYSLLEW…RLLQLVLGCA (119 aa)) form the Calponin-homology (CH) domain. 2 coiled-coil regions span residues 135 to 440 (EIMC…LKCG) and 484 to 594 (QTAL…AKEV).

The protein belongs to the hook family. Homodimer. Interacts with microtubules via its N-terminus.

Its subcellular location is the cytoplasm. The protein resides in the cytoskeleton. It localises to the endosome. The protein localises to the synapse. Its function is as follows. Involved in endocytic trafficking by stabilizing organelles of the endocytic pathway. Probably acts as a cytoskeletal linker protein required to tether endosome vesicles to the cytoskeleton. Involved in modulation of endocytosis at stages required for down-regulation of membrane proteins that control synapse size. Not involved in synaptic vesicle recycling. Required in R7 cells for boss endocytosis into multivesicular bodies (MVBs). Has a role in regulating adult longevity. This chain is Protein hook, found in Drosophila grimshawi (Hawaiian fruit fly).